The chain runs to 386 residues: 11-beta-hydroxysteroid dehydrogenase type 2 (386 aa).

NAD(+) is bound at residue 82–111 (TRAVLITGCDTGFGKETAKKLDAMGFTVLA). Serine 219 lines the substrate pocket. Tyrosine 232 functions as the Proton acceptor in the catalytic mechanism.

Belongs to the short-chain dehydrogenases/reductases (SDR) family. Interacts with ligand-free cytoplasmic NR3C2. As to expression, highly expressed in kidney. Also found in colon and small intestine. Not expressed in the adrenal gland. Expressed in uterus.

It is found in the microsome. It localises to the endoplasmic reticulum. The enzyme catalyses an 11beta-hydroxysteroid + NAD(+) = an 11-oxosteroid + NADH + H(+). The catalysed reaction is corticosterone + NAD(+) = 11-dehydrocorticosterone + NADH + H(+). It catalyses the reaction 11beta,17beta-dihydroxyandrost-4-ene-3-one + NAD(+) = 17beta-hydroxyandrost-4-ene-3,11-dione + NADH + H(+). It carries out the reaction 11beta-hydroxyandrost-4-ene-3,17-dione + NAD(+) = androst-4-ene-3,11,17-trione + NADH + H(+). Its pathway is steroid metabolism. Inhibited by glycyrrhetinic acid. Induced by progesterone, through the Ihh signaling pathway. Its function is as follows. Catalyzes the conversion of biologically active 11beta-hydroxyglucocorticoids (11beta-hydroxysteroid) such as corticosterone, to inactive 11-ketoglucocorticoids (11-oxosteroid) such as 11-dehydrocorticosterone, in the presence of NAD(+). Functions as a dehydrogenase (oxidase), thereby decreasing the concentration of active glucocorticoids, thus protecting the nonselective mineralocorticoid receptor from occupation by glucocorticoids. Plays an important role in maintaining glucocorticoids balance during preimplantation and protects the fetus from excessive maternal corticosterone exposure. Catalyzes the oxidation of 11beta-hydroxytestosterone (11beta,17beta-dihydroxyandrost-4-ene-3-one) to 11-ketotestosterone (17beta-hydroxyandrost-4-ene-3,11-dione), a major bioactive androgen. Catalyzes the conversion of 11beta-hydroxyandrostenedione (11beta-hydroxyandrost-4-ene-3,17-dione) to 11-ketoandrostenedione (androst-4-ene-3,11,17-trione), which can be further metabolized to 11-ketotestosterone. Converts 7-beta-25-dihydroxycholesterol to 7-oxo-25-hydroxycholesterol in vitro. 7-beta-25-dihydroxycholesterol (not 7-oxo-25-hydroxycholesterol) acts as a ligand for the G-protein-coupled receptor (GPCR) Epstein-Barr virus-induced gene 2 (EBI2) and may thereby regulate immune cell migration. This is 11-beta-hydroxysteroid dehydrogenase type 2 (Hsd11b2) from Mus musculus (Mouse).